We begin with the raw amino-acid sequence, 202 residues long: Putative chromophore lyase CpcV (202 aa).

Belongs to the CpcS/CpeS biliprotein lyase family.

Its function is as follows. Covalently attaches a chromophore to Cys residue(s) of phycobiliproteins. In Picosynechococcus sp. (strain ATCC 27264 / PCC 7002 / PR-6) (Agmenellum quadruplicatum), this protein is Putative chromophore lyase CpcV (cpcV).